We begin with the raw amino-acid sequence, 271 residues long: MTVLVAAQQTETPDPLPSRQARLAYRGGEVGSTAGVAPGFVQGNLAILPAEYASAFHRFCQLNPKPCPIIGMSDVGSPHIPALGADLDIRTDVPRYRVWRDGEVVDEPTDVTGYWRDDLVTFVLGCSFSFEEALLDEGMPIRHIEQNVRVPMYRTNIACGEAGPFAGPMVVSMRPFKPADAIRAVQITSRYPAVHGAPVHLGHPHLIGIKDIAKPDYGDPVPVADDEIPVFWACGVTPQSVINAARLPFAITHSPGLMLVTDLKNRTMAVI.

The protein belongs to the D-glutamate cyclase family.

The protein is Putative hydro-lyase blr2921 of Bradyrhizobium diazoefficiens (strain JCM 10833 / BCRC 13528 / IAM 13628 / NBRC 14792 / USDA 110).